The sequence spans 518 residues: Ribonuclease Y (518 aa).

A helical membrane pass occupies residues Val-2–Ile-22. Residues Gln-91–Ala-119 form a disordered region. The 61-residue stretch at Thr-208–Leu-268 folds into the KH domain. Residues Val-334–Ala-427 enclose the HD domain.

It belongs to the RNase Y family.

It localises to the cell membrane. Its function is as follows. Endoribonuclease that initiates mRNA decay. The protein is Ribonuclease Y of Enterococcus faecalis (strain ATCC 700802 / V583).